The following is a 563-amino-acid chain: MDIRRTVLWMIFSFSLLLLWNNWQIHNGKPSLFGGPAPEAAATQQPKADANGTAASSTASIPSSPAAAPAAASVPGAAAPAAAKSEQVVITTDVLRLTFDSNGAQLIRAELLKYPSSSQSDKPTVLMDRSADLVYVAQTGVVGAPQGESFPTHQTPFHLVSSERSLTGDTLDVVFEAESGGLKVTKTYTLHRGRYDVDVRHAMANTGGAPLSPALYLQLERDGTDPAGTSSFYHTFTGVAVYSEQDKFQKVTFSDIEKKKGTYIKQADNGWIGIVQHYFATAWIPAQGKQRTNELLQVQQNLYAARTIEAVGTIAPGSSANVDAHLWVGPQDQKAMAAVAPGLELVVDYGWLTIIAKPLFTLMTWLHGLLGNWGWTIVALTVIIKAVFFPLAAASYRSMARMKQVAPRLQALKEKYGDDRQKLNQAMMEMYRTEKINPLGGCLPMVVQIPVFIALYWVLLASVEMRGAPWILWVHDLSVRDPFFILPAIMMATMFLQIKLNPTPPDPVQAKVMMIMPLVFGGMMFFFPAGLVLYWCVNNTLSIAQQWTITRNLERQAAAAANR.

Residues 6–26 (TVLWMIFSFSLLLLWNNWQIH) traverse the membrane as a helical segment. The disordered stretch occupies residues 36 to 70 (PAPEAAATQQPKADANGTAASSTASIPSSPAAAPA). Over residues 54 to 70 (AASSTASIPSSPAAAPA) the composition is skewed to low complexity. A run of 4 helical transmembrane segments spans residues 373–393 (WGWT…PLAA), 443–463 (LPMV…LASV), 482–502 (PFFI…KLNP), and 512–532 (VMMI…AGLV).

This sequence belongs to the OXA1/ALB3/YidC family. Type 1 subfamily. As to quaternary structure, interacts with the Sec translocase complex via SecD. Specifically interacts with transmembrane segments of nascent integral membrane proteins during membrane integration.

The protein localises to the cell inner membrane. In terms of biological role, required for the insertion and/or proper folding and/or complex formation of integral membrane proteins into the membrane. Involved in integration of membrane proteins that insert both dependently and independently of the Sec translocase complex, as well as at least some lipoproteins. Aids folding of multispanning membrane proteins. The sequence is that of Membrane protein insertase YidC from Bordetella parapertussis (strain 12822 / ATCC BAA-587 / NCTC 13253).